We begin with the raw amino-acid sequence, 196 residues long: ATP-dependent Clp protease proteolytic subunit (196 aa).

Ser-101 serves as the catalytic Nucleophile. His-126 is a catalytic residue.

It belongs to the peptidase S14 family. As to quaternary structure, component of the chloroplastic Clp protease core complex.

It localises to the plastid. It is found in the chloroplast stroma. It catalyses the reaction Hydrolysis of proteins to small peptides in the presence of ATP and magnesium. alpha-casein is the usual test substrate. In the absence of ATP, only oligopeptides shorter than five residues are hydrolyzed (such as succinyl-Leu-Tyr-|-NHMec, and Leu-Tyr-Leu-|-Tyr-Trp, in which cleavage of the -Tyr-|-Leu- and -Tyr-|-Trp bonds also occurs).. Its function is as follows. Cleaves peptides in various proteins in a process that requires ATP hydrolysis. Has a chymotrypsin-like activity. Plays a major role in the degradation of misfolded proteins. This chain is ATP-dependent Clp protease proteolytic subunit, found in Coffea arabica (Arabian coffee).